We begin with the raw amino-acid sequence, 347 residues long: GMP reductase (347 aa).

108–131 (ADFEKTVQILALNPALNFVCIDVA) serves as a coordination point for NADP(+). 2 residues coordinate K(+): Gly-181 and Gly-183. Catalysis depends on Cys-186, which acts as the Thioimidate intermediate. Residue 216–239 (IVSDGGCTMPGDVAKAFGGGADFV) participates in NADP(+) binding.

This sequence belongs to the IMPDH/GMPR family. GuaC type 1 subfamily. As to quaternary structure, homotetramer.

The enzyme catalyses IMP + NH4(+) + NADP(+) = GMP + NADPH + 2 H(+). Its function is as follows. Catalyzes the irreversible NADPH-dependent deamination of GMP to IMP. It functions in the conversion of nucleobase, nucleoside and nucleotide derivatives of G to A nucleotides, and in maintaining the intracellular balance of A and G nucleotides. The sequence is that of GMP reductase from Salmonella paratyphi A (strain ATCC 9150 / SARB42).